A 510-amino-acid polypeptide reads, in one-letter code: NAD(P)H-quinone oxidoreductase subunit 2 A, chloroplastic (510 aa).

13 consecutive transmembrane segments (helical) span residues 24 to 44, 57 to 77, 99 to 119, 124 to 144, 149 to 169, 183 to 203, 227 to 247, 295 to 315, 323 to 343, 354 to 374, 395 to 415, 418 to 438, and 484 to 504; these read LLLF…GLIL, IPWL…ALLF, IFQF…VEYI, MAIT…MFLC, LITI…LSGY, YLLM…WLYG, PGIS…LSPA, WHLL…LIAI, MLAY…IVGD, YMLF…LFGL, ALSL…AGFF, LYLF…IGLL, and MIVC…IIAI.

It belongs to the complex I subunit 2 family. NDH is composed of at least 16 different subunits, 5 of which are encoded in the nucleus.

Its subcellular location is the plastid. The protein localises to the chloroplast thylakoid membrane. It carries out the reaction a plastoquinone + NADH + (n+1) H(+)(in) = a plastoquinol + NAD(+) + n H(+)(out). The enzyme catalyses a plastoquinone + NADPH + (n+1) H(+)(in) = a plastoquinol + NADP(+) + n H(+)(out). In terms of biological role, NDH shuttles electrons from NAD(P)H:plastoquinone, via FMN and iron-sulfur (Fe-S) centers, to quinones in the photosynthetic chain and possibly in a chloroplast respiratory chain. The immediate electron acceptor for the enzyme in this species is believed to be plastoquinone. Couples the redox reaction to proton translocation, and thus conserves the redox energy in a proton gradient. The chain is NAD(P)H-quinone oxidoreductase subunit 2 A, chloroplastic from Solanum lycopersicum (Tomato).